Consider the following 497-residue polypeptide: Bifunctional protein GlmU (497 aa).

The segment at 1–241 (MSPETIGPAA…RWQVEGANDR (241 aa)) is pyrophosphorylase. UDP-N-acetyl-alpha-D-glucosamine contacts are provided by residues 14–17 (LAAG), Lys28, Gln81, 86–87 (GT), 112–114 (YGD), Gly151, Glu166, Asn181, and Asn239. Position 114 (Asp114) interacts with Mg(2+). Mg(2+) is bound at residue Asn239. Residues 242-262 (IQLSALAAEHNRRIIESWMRA) form a linker region. Residues 263 to 497 (GVTVVDPATT…QATIEEGKQA (235 aa)) form an N-acetyltransferase region. 2 residues coordinate UDP-N-acetyl-alpha-D-glucosamine: Arg344 and Lys362. The Proton acceptor role is filled by His374. Positions 377 and 388 each coordinate UDP-N-acetyl-alpha-D-glucosamine. Acetyl-CoA is bound by residues 397 to 398 (NY), Ser416, and Ala434.

In the N-terminal section; belongs to the N-acetylglucosamine-1-phosphate uridyltransferase family. This sequence in the C-terminal section; belongs to the transferase hexapeptide repeat family. Homotrimer. Mg(2+) is required as a cofactor.

The protein resides in the cytoplasm. It carries out the reaction alpha-D-glucosamine 1-phosphate + acetyl-CoA = N-acetyl-alpha-D-glucosamine 1-phosphate + CoA + H(+). It catalyses the reaction N-acetyl-alpha-D-glucosamine 1-phosphate + UTP + H(+) = UDP-N-acetyl-alpha-D-glucosamine + diphosphate. It participates in nucleotide-sugar biosynthesis; UDP-N-acetyl-alpha-D-glucosamine biosynthesis; N-acetyl-alpha-D-glucosamine 1-phosphate from alpha-D-glucosamine 6-phosphate (route II): step 2/2. Its pathway is nucleotide-sugar biosynthesis; UDP-N-acetyl-alpha-D-glucosamine biosynthesis; UDP-N-acetyl-alpha-D-glucosamine from N-acetyl-alpha-D-glucosamine 1-phosphate: step 1/1. It functions in the pathway bacterial outer membrane biogenesis; LPS lipid A biosynthesis. Catalyzes the last two sequential reactions in the de novo biosynthetic pathway for UDP-N-acetylglucosamine (UDP-GlcNAc). The C-terminal domain catalyzes the transfer of acetyl group from acetyl coenzyme A to glucosamine-1-phosphate (GlcN-1-P) to produce N-acetylglucosamine-1-phosphate (GlcNAc-1-P), which is converted into UDP-GlcNAc by the transfer of uridine 5-monophosphate (from uridine 5-triphosphate), a reaction catalyzed by the N-terminal domain. This is Bifunctional protein GlmU from Paenarthrobacter aurescens (strain TC1).